The sequence spans 183 residues: Isopentenyl-diphosphate Delta-isomerase (183 aa).

Mn(2+) is bound by residues His26 and His33. One can recognise a Nudix hydrolase domain in the interval 31–165 (SLHLAFSSWL…PWAFSPWMVS (135 aa)). The active site involves Cys68. His70 is a Mn(2+) binding site. Glu88 contributes to the Mg(2+) binding site. Residues Glu115 and Glu117 each contribute to the Mn(2+) site. Glu117 is an active-site residue.

It belongs to the IPP isomerase type 1 family. As to quaternary structure, homodimer. Mg(2+) serves as cofactor. Requires Mn(2+) as cofactor.

The protein resides in the cytoplasm. The enzyme catalyses isopentenyl diphosphate = dimethylallyl diphosphate. Its pathway is isoprenoid biosynthesis; dimethylallyl diphosphate biosynthesis; dimethylallyl diphosphate from isopentenyl diphosphate: step 1/1. Catalyzes the 1,3-allylic rearrangement of the homoallylic substrate isopentenyl (IPP) to its highly electrophilic allylic isomer, dimethylallyl diphosphate (DMAPP). The sequence is that of Isopentenyl-diphosphate Delta-isomerase from Enterobacter sp. (strain 638).